Reading from the N-terminus, the 203-residue chain is 3-isopropylmalate dehydratase small subunit (203 aa).

The protein belongs to the LeuD family. LeuD type 1 subfamily. In terms of assembly, heterodimer of LeuC and LeuD.

It catalyses the reaction (2R,3S)-3-isopropylmalate = (2S)-2-isopropylmalate. It participates in amino-acid biosynthesis; L-leucine biosynthesis; L-leucine from 3-methyl-2-oxobutanoate: step 2/4. In terms of biological role, catalyzes the isomerization between 2-isopropylmalate and 3-isopropylmalate, via the formation of 2-isopropylmaleate. The protein is 3-isopropylmalate dehydratase small subunit of Pelagibacter ubique (strain HTCC1062).